We begin with the raw amino-acid sequence, 156 residues long: Putative pre-16S rRNA nuclease (156 aa).

The protein belongs to the YqgF nuclease family.

The protein resides in the cytoplasm. In terms of biological role, could be a nuclease involved in processing of the 5'-end of pre-16S rRNA. This is Putative pre-16S rRNA nuclease from Aromatoleum aromaticum (strain DSM 19018 / LMG 30748 / EbN1) (Azoarcus sp. (strain EbN1)).